The following is a 145-amino-acid chain: Basic phospholipase A2 S2-22 (145 aa).

An N-terminal signal peptide occupies residues 1-19 (MYPAHLLVLLAVCVSLLGA). Residues 20–27 (SDIPPQPL) constitute a propeptide that is removed on maturation. Cystine bridges form between cysteine 38/cysteine 99, cysteine 54/cysteine 144, cysteine 56/cysteine 72, cysteine 71/cysteine 127, cysteine 78/cysteine 120, cysteine 88/cysteine 113, and cysteine 106/cysteine 118. Tyrosine 55, glycine 57, and glycine 59 together coordinate Ca(2+). Residue histidine 75 is part of the active site. Aspartate 76 provides a ligand contact to Ca(2+). The active site involves aspartate 121.

This sequence belongs to the phospholipase A2 family. Group I subfamily. D49 sub-subfamily. It depends on Ca(2+) as a cofactor. In terms of tissue distribution, expressed by the venom gland.

Its subcellular location is the secreted. It carries out the reaction a 1,2-diacyl-sn-glycero-3-phosphocholine + H2O = a 1-acyl-sn-glycero-3-phosphocholine + a fatty acid + H(+). Functionally, snake venom phospholipase A2 (PLA2) that inhibits collagen-induced platelet aggregation. PLA2 catalyzes the calcium-dependent hydrolysis of the 2-acyl groups in 3-sn-phosphoglycerides. This Austrelaps superbus (Lowland copperhead snake) protein is Basic phospholipase A2 S2-22.